The following is a 537-amino-acid chain: Phosphoenolpyruvate carboxykinase (ATP) (537 aa).

Substrate is bound by residues Arg-61, Tyr-194, and Lys-200. ATP contacts are provided by residues Lys-200, His-219, and 235–243 (GLSGTGKTT). Mn(2+) is bound by residues Lys-200 and His-219. Asp-256 contacts Mn(2+). Residues Glu-284, Arg-322, and Thr-448 each contribute to the ATP site. A substrate-binding site is contributed by Arg-322.

This sequence belongs to the phosphoenolpyruvate carboxykinase (ATP) family. Mn(2+) is required as a cofactor.

Its subcellular location is the cytoplasm. The catalysed reaction is oxaloacetate + ATP = phosphoenolpyruvate + ADP + CO2. It functions in the pathway carbohydrate biosynthesis; gluconeogenesis. Functionally, involved in the gluconeogenesis. Catalyzes the conversion of oxaloacetate (OAA) to phosphoenolpyruvate (PEP) through direct phosphoryl transfer between the nucleoside triphosphate and OAA. This is Phosphoenolpyruvate carboxykinase (ATP) from Bradyrhizobium sp. (strain BTAi1 / ATCC BAA-1182).